A 140-amino-acid polypeptide reads, in one-letter code: Small ribosomal subunit protein uS12 (140 aa).

Positions 1-44 (MPTFNQLVRKGRKTMEKNSQAPALQKGFNSLRKKTTDASAPQKR) are disordered. Asp102 carries the 3-methylthioaspartic acid modification. Positions 120-140 (VAKRRQARSKYGAKRPKEAKK) are disordered. Residues 121–140 (AKRRQARSKYGAKRPKEAKK) show a composition bias toward basic residues.

This sequence belongs to the universal ribosomal protein uS12 family. As to quaternary structure, part of the 30S ribosomal subunit. Contacts proteins S8 and S17. May interact with IF1 in the 30S initiation complex.

Functionally, with S4 and S5 plays an important role in translational accuracy. In terms of biological role, interacts with and stabilizes bases of the 16S rRNA that are involved in tRNA selection in the A site and with the mRNA backbone. Located at the interface of the 30S and 50S subunits, it traverses the body of the 30S subunit contacting proteins on the other side and probably holding the rRNA structure together. The combined cluster of proteins S8, S12 and S17 appears to hold together the shoulder and platform of the 30S subunit. The chain is Small ribosomal subunit protein uS12 from Lachnoclostridium phytofermentans (strain ATCC 700394 / DSM 18823 / ISDg) (Clostridium phytofermentans).